The sequence spans 617 residues: ATP-dependent RNA helicase DBP1 (617 aa).

The tract at residues 1–90 (MADLPQKVSN…TSANYNRGGS (90 aa)) is disordered. The span at 7–17 (KVSNLSINNKE) shows a compositional bias: polar residues. Residues 38–58 (PSFERSTPKQEDKVTGGDFFR) are compositionally biased toward basic and acidic residues. The span at 79–90 (GGTSANYNRGGS) shows a compositional bias: polar residues. A Q motif motif is present at residues 154-182 (LDFSSPPLDELLMENIKLASFTKPTPVQK). The Helicase ATP-binding domain maps to 185 to 374 (IPIVTKGRDL…RDFLDNYIFL (190 aa)). 198 to 205 (AQTGSGKT) contributes to the ATP binding site. A DEAD box motif is present at residues 318–321 (DEAD). Positions 385–545 (NITQRILYVD…EVPTFLSDLS (161 aa)) constitute a Helicase C-terminal domain. Positions 542 to 617 (SDLSRQNSRG…GYGNSNASWW (76 aa)) are disordered. Residues 580-594 (FGSTRPRNTGTSNWG) are compositionally biased toward polar residues.

The protein belongs to the DEAD box helicase family. DDX3/DED1 subfamily.

Its subcellular location is the cytoplasm. The catalysed reaction is ATP + H2O = ADP + phosphate + H(+). Functionally, ATP-binding RNA helicase involved in translation initiation. Remodels RNA in response to ADP and ATP concentrations by facilitating disruption, but also formation of RNA duplexes. Redundant to DED1, may be required in conditions in which DED1 expression is decreased. The polypeptide is ATP-dependent RNA helicase DBP1 (DBP1) (Saccharomyces cerevisiae (strain ATCC 204508 / S288c) (Baker's yeast)).